A 170-amino-acid polypeptide reads, in one-letter code: ATP synthase subunit b (170 aa).

Residues 30–50 (FFFVLAIFLVVLAVIGTFVVP) traverse the membrane as a helical segment.

It belongs to the ATPase B chain family. F-type ATPases have 2 components, F(1) - the catalytic core - and F(0) - the membrane proton channel. F(1) has five subunits: alpha(3), beta(3), gamma(1), delta(1), epsilon(1). F(0) has three main subunits: a(1), b(2) and c(10-14). The alpha and beta chains form an alternating ring which encloses part of the gamma chain. F(1) is attached to F(0) by a central stalk formed by the gamma and epsilon chains, while a peripheral stalk is formed by the delta and b chains.

It localises to the cell membrane. In terms of biological role, f(1)F(0) ATP synthase produces ATP from ADP in the presence of a proton or sodium gradient. F-type ATPases consist of two structural domains, F(1) containing the extramembraneous catalytic core and F(0) containing the membrane proton channel, linked together by a central stalk and a peripheral stalk. During catalysis, ATP synthesis in the catalytic domain of F(1) is coupled via a rotary mechanism of the central stalk subunits to proton translocation. Functionally, component of the F(0) channel, it forms part of the peripheral stalk, linking F(1) to F(0). This chain is ATP synthase subunit b, found in Mycobacterium ulcerans (strain Agy99).